The primary structure comprises 695 residues: ATP-dependent permease MDL1, mitochondrial (695 aa).

Residues 1-100 (MIVRMIRLCK…RLFVLSKPES (100 aa)) constitute a mitochondrion transit peptide. A run of 5 helical transmembrane segments spans residues 103 to 123 (IGLA…VPSV), 156 to 176 (FTAL…RIII), 242 to 262 (FVGF…MMIL), 337 to 357 (GLFF…LLLV), and 372 to 392 (LSSF…LSSF). In terms of domain architecture, ABC transmembrane type-1 spans 103–398 (IGLALLLILI…LSSFYSELMK (296 aa)). Residues 432–673 (IVFKNVSFTY…PNSELNALLA (242 aa)) form the ABC transporter domain. Residue 467-474 (GPSGSGKS) participates in ATP binding.

It belongs to the ABC transporter superfamily. ABCB family. Mitochondrial peptide exporter (TC 3.A.1.212) subfamily.

It localises to the mitochondrion inner membrane. Functionally, mediates export of peptides with molecular masses of 2100 to 600 daltons generated upon proteolysis of mitochondrial inner membrane proteins. This chain is ATP-dependent permease MDL1, mitochondrial (MDL1), found in Saccharomyces cerevisiae (strain ATCC 204508 / S288c) (Baker's yeast).